A 207-amino-acid chain; its full sequence is FMN-dependent NADH:quinone oxidoreductase 2 (207 aa).

FMN-binding positions include serine 9, 15-17 (SAS), and 97-100 (MWNF).

It belongs to the azoreductase type 1 family. In terms of assembly, homodimer. FMN is required as a cofactor.

It catalyses the reaction 2 a quinone + NADH + H(+) = 2 a 1,4-benzosemiquinone + NAD(+). The catalysed reaction is N,N-dimethyl-1,4-phenylenediamine + anthranilate + 2 NAD(+) = 2-(4-dimethylaminophenyl)diazenylbenzoate + 2 NADH + 2 H(+). In terms of biological role, quinone reductase that provides resistance to thiol-specific stress caused by electrophilic quinones. Its function is as follows. Also exhibits azoreductase activity. Catalyzes the reductive cleavage of the azo bond in aromatic azo compounds to the corresponding amines. The protein is FMN-dependent NADH:quinone oxidoreductase 2 of Burkholderia lata (strain ATCC 17760 / DSM 23089 / LMG 22485 / NCIMB 9086 / R18194 / 383).